The chain runs to 472 residues: Peptidoglycan endopeptidase RipA (472 aa).

The segment at residues 1–39 (MRRNRRGSPARPAARFVRPAIPSALSVALLVCTPGLATA) is a signal peptide (tat-type signal). Residues 340–472 (RQASEYVIRR…TPYVVRYIEY (133 aa)) form the NlpC/P60 domain. Cys383 (nucleophile) is an active-site residue. Residue His432 is the Proton acceptor of the active site. Glu444 is a catalytic residue.

It belongs to the peptidase C40 family. In terms of assembly, monomer. Interacts with RpfB and PBP1A (ponA1) via residues 448-472 of RipA, interacts with RpfE. Interacts with the chaperone MoxR1. RipA-MoxR1 interaction in the cytoplasm leads to proper folding of RipA, resulting in its secretion. Also interacts with Mce2B. In terms of processing, exported by the Tat system. The position of the signal peptide cleavage has not been experimentally proven.

Its subcellular location is the secreted. With respect to regulation, moxR1-mediated folding is critical for secretion via the TAT system. The synergistic effects on peptidoglycan degradation of RipA plus RpfB are inhibited by addition of PBP1A (ponA1). Its function is as follows. Peptidoglycan endopeptidase that cleaves the bond between D-glutamate and meso-diaminopimelate. Binds and degrades high-molecular weight peptidoglycan from a number of Actinobacteria; activity is increased in the presence of RpfB and inhibited by PBP1A (ponA1). Required for normal separation of daughter cells after cell division and for cell wall integrity. Required for host cell invasion and intracellular survival in host macrophages. The chain is Peptidoglycan endopeptidase RipA (ripA) from Mycobacterium tuberculosis (strain ATCC 25618 / H37Rv).